We begin with the raw amino-acid sequence, 368 residues long: Branched-chain-amino-acid aminotransferase (368 aa).

A pyridoxal 5'-phosphate-binding site is contributed by Arg101. The residue at position 204 (Lys204) is an N6-(pyridoxal phosphate)lysine. Pyridoxal 5'-phosphate-binding positions include Tyr209, 271 to 272 (IT), and Thr314.

This sequence belongs to the class-IV pyridoxal-phosphate-dependent aminotransferase family. As to quaternary structure, homodimer. Pyridoxal 5'-phosphate is required as a cofactor.

The enzyme catalyses L-leucine + 2-oxoglutarate = 4-methyl-2-oxopentanoate + L-glutamate. The catalysed reaction is L-isoleucine + 2-oxoglutarate = (S)-3-methyl-2-oxopentanoate + L-glutamate. It carries out the reaction L-valine + 2-oxoglutarate = 3-methyl-2-oxobutanoate + L-glutamate. The protein operates within amino-acid biosynthesis; L-isoleucine biosynthesis; L-isoleucine from 2-oxobutanoate: step 4/4. It functions in the pathway amino-acid biosynthesis; L-leucine biosynthesis; L-leucine from 3-methyl-2-oxobutanoate: step 4/4. It participates in amino-acid biosynthesis; L-valine biosynthesis; L-valine from pyruvate: step 4/4. In terms of biological role, catalyzes the reversible transfers of an amino group from glutamate to the alpha-ketoacid of the respective amino acid in the final step in the biosynthesis of branchedchain amino acids. The chain is Branched-chain-amino-acid aminotransferase (ilvE) from Mycobacterium tuberculosis (strain CDC 1551 / Oshkosh).